The chain runs to 232 residues: Vesicle transport through interaction with t-SNAREs homolog 1B (232 aa).

N-acetylalanine is present on A2. 2 interaction with CLINT1 regions span residues 2–23 (ASSA…GLHE) and 69–73 (APLSF). Residues 2–208 (ASSAASSEHF…SRKVTTNKLL (207 aa)) are Cytoplasmic-facing. Residues 35-98 (TAGTEEKKKL…AKLHREVRST (64 aa)) are a coiled coil. A Phosphothreonine modification is found at T103. The residue at position 107 (R107) is an Omega-N-methylarginine. Residue S138 is modified to Phosphoserine. A coiled-coil region spans residues 161–198 (SEIIEELGEQRDQLERTKSRLVNTSENLSKSRKILRSM). Residues 209–229 (LSIIILLELAILGGLVYYKFF) traverse the membrane as a helical; Anchor for type IV membrane protein segment. Topologically, residues 230-232 (RSH) are vesicular.

It belongs to the VTI1 family. Forms a SNARE complex with STX7, STX8 and VAMP8 which functions in the homotypic fusion of late endosomes. Component of the SNARE complex composed of STX7, STX8, VAMP7 and VIT1B that is required for heterotypic fusion of late endosomes with lysosomes. May interact with STX17. Interacts with CLINT1. In terms of tissue distribution, expressed in all tissues examined.

The protein localises to the early endosome membrane. Its subcellular location is the late endosome membrane. It is found in the lysosome membrane. It localises to the cytoplasmic granule. The protein resides in the recycling endosome membrane. V-SNARE that mediates vesicle transport pathways through interactions with t-SNAREs on the target membrane. These interactions are proposed to mediate aspects of the specificity of vesicle trafficking and to promote fusion of the lipid bilayers. May be concerned with increased secretion of cytokines associated with cellular senescence. In Homo sapiens (Human), this protein is Vesicle transport through interaction with t-SNAREs homolog 1B (VTI1B).